Consider the following 85-residue polypeptide: Toxin To6 (85 aa).

The signal sequence occupies residues 1 to 20 (MSIFPIILALLLIGLDEGEA). Residues 21 to 83 (LDGYPLSKNN…EMYPGRLPCN (63 aa)) form the LCN-type CS-alpha/beta domain. 4 cysteine pairs are disulfide-bonded: Cys-32/Cys-82, Cys-36/Cys-59, Cys-42/Cys-64, and Cys-46/Cys-66.

In terms of tissue distribution, expressed by the venom gland.

The protein localises to the secreted. Beta toxins bind voltage-independently at site-4 of sodium channels (Nav) and shift the voltage of activation toward more negative potentials thereby affecting sodium channel activation and promoting spontaneous and repetitive firing. In Tityus obscurus (Amazonian scorpion), this protein is Toxin To6.